The primary structure comprises 511 residues: 2,3-bisphosphoglycerate-independent phosphoglycerate mutase (511 aa).

Asp12 contributes to the Mn(2+) binding site. Residue Tyr36 is modified to Phosphotyrosine. Ser62 lines the Mn(2+) pocket. The active-site Phosphoserine intermediate is the Ser62. Substrate-binding positions include His123, 153–154 (RD), Arg185, Arg191, 261–264 (RPDR), and Lys336. The Mn(2+) site is built by Asp403, His407, Asp444, His445, and His462.

This sequence belongs to the BPG-independent phosphoglycerate mutase family. In terms of assembly, monomer. Requires Mn(2+) as cofactor.

The catalysed reaction is (2R)-2-phosphoglycerate = (2R)-3-phosphoglycerate. The protein operates within carbohydrate degradation; glycolysis; pyruvate from D-glyceraldehyde 3-phosphate: step 3/5. Its function is as follows. Essential for rapid growth and for sporulation. Catalyzes the interconversion of 2-phosphoglycerate and 3-phosphoglycerate. This chain is 2,3-bisphosphoglycerate-independent phosphoglycerate mutase, found in Bacillus velezensis (strain DSM 23117 / BGSC 10A6 / LMG 26770 / FZB42) (Bacillus amyloliquefaciens subsp. plantarum).